A 540-amino-acid chain; its full sequence is tRNA-2-methylthio-N(6)-dimethylallyladenosine synthase (540 aa).

The MTTase N-terminal domain maps to 41–157; it reads RTYEVRTFGC…LPTLLERSAH (117 aa). [4Fe-4S] cluster contacts are provided by Cys50, Cys86, Cys120, Cys194, Cys198, and Cys201. Residues 180–416 form the Radical SAM core domain; sequence RESAYSGWVS…IALQERIQAE (237 aa). Positions 419–486 constitute a TRAM domain; the sequence is KELVGTTQEL…PFFLIADGPL (68 aa).

This sequence belongs to the methylthiotransferase family. MiaB subfamily. In terms of assembly, monomer. [4Fe-4S] cluster is required as a cofactor.

The protein localises to the cytoplasm. It carries out the reaction N(6)-dimethylallyladenosine(37) in tRNA + (sulfur carrier)-SH + AH2 + 2 S-adenosyl-L-methionine = 2-methylsulfanyl-N(6)-dimethylallyladenosine(37) in tRNA + (sulfur carrier)-H + 5'-deoxyadenosine + L-methionine + A + S-adenosyl-L-homocysteine + 2 H(+). Its function is as follows. Catalyzes the methylthiolation of N6-(dimethylallyl)adenosine (i(6)A), leading to the formation of 2-methylthio-N6-(dimethylallyl)adenosine (ms(2)i(6)A) at position 37 in tRNAs that read codons beginning with uridine. The polypeptide is tRNA-2-methylthio-N(6)-dimethylallyladenosine synthase (Corynebacterium urealyticum (strain ATCC 43042 / DSM 7109)).